The following is a 225-amino-acid chain: MKLLKSLLFLASVLFISSQAEKKVTGELTFYAAGDNCPPSGEIAYPGLHSSAGGLGTYANPITVAASTAWLSAGKKVYVAAYKKYFIMEDSCEECENEWDSNGKYHMDAWIGPSTIHSGTTNCEVALTLSSTQFIIDPLSTYAVDTTAFFNGTTGACLKTPDNCVDQGNECGNTCQIPSSMSCSSAASMFLLSETRFKALNPNLDCTKNIAKGKSVCQSGSCGGP.

This is an uncharacterized protein from Dictyostelium discoideum (Social amoeba).